A 76-amino-acid chain; its full sequence is DNA-directed RNA polymerase subunit omega (76 aa).

The protein belongs to the RNA polymerase subunit omega family. In terms of assembly, the RNAP catalytic core consists of 2 alpha, 1 beta, 1 beta' and 1 omega subunit. When a sigma factor is associated with the core the holoenzyme is formed, which can initiate transcription.

It catalyses the reaction RNA(n) + a ribonucleoside 5'-triphosphate = RNA(n+1) + diphosphate. Its function is as follows. Promotes RNA polymerase assembly. Latches the N- and C-terminal regions of the beta' subunit thereby facilitating its interaction with the beta and alpha subunits. This Staphylococcus carnosus (strain TM300) protein is DNA-directed RNA polymerase subunit omega.